We begin with the raw amino-acid sequence, 491 residues long: Glutamate--tRNA ligase (491 aa).

A 'HIGH' region motif is present at residues 13–23 (PSPTGFLHIGN). Zn(2+) contacts are provided by Cys110, Cys112, Cys137, and His139. Positions 254 to 258 (KLSKR) match the 'KMSKS' region motif. Position 257 (Lys257) interacts with ATP.

It belongs to the class-I aminoacyl-tRNA synthetase family. Glutamate--tRNA ligase type 1 subfamily. As to quaternary structure, monomer. Zn(2+) serves as cofactor.

It localises to the cytoplasm. It catalyses the reaction tRNA(Glu) + L-glutamate + ATP = L-glutamyl-tRNA(Glu) + AMP + diphosphate. Functionally, catalyzes the attachment of glutamate to tRNA(Glu) in a two-step reaction: glutamate is first activated by ATP to form Glu-AMP and then transferred to the acceptor end of tRNA(Glu). This chain is Glutamate--tRNA ligase, found in Listeria monocytogenes serotype 4b (strain F2365).